The chain runs to 394 residues: DNA replication and repair protein RecF (394 aa).

ATP is bound at residue 30–37; that stretch reads GRNGFGKT.

The protein belongs to the RecF family.

The protein resides in the cytoplasm. The RecF protein is involved in DNA metabolism; it is required for DNA replication and normal SOS inducibility. RecF binds preferentially to single-stranded, linear DNA. It also seems to bind ATP. In Corynebacterium glutamicum (strain ATCC 13032 / DSM 20300 / JCM 1318 / BCRC 11384 / CCUG 27702 / LMG 3730 / NBRC 12168 / NCIMB 10025 / NRRL B-2784 / 534), this protein is DNA replication and repair protein RecF.